A 273-amino-acid chain; its full sequence is Dermonecrotic toxin LspiSicTox-betaIE1ii (273 aa).

H5 is a catalytic residue. The Mg(2+) site is built by E25 and D27. The Nucleophile role is filled by H41. Disulfide bonds link C45-C51 and C47-C189. D85 lines the Mg(2+) pocket.

This sequence belongs to the arthropod phospholipase D family. Class II subfamily. The cofactor is Mg(2+). As to expression, expressed by the venom gland.

Its subcellular location is the secreted. It carries out the reaction an N-(acyl)-sphingosylphosphocholine = an N-(acyl)-sphingosyl-1,3-cyclic phosphate + choline. The catalysed reaction is an N-(acyl)-sphingosylphosphoethanolamine = an N-(acyl)-sphingosyl-1,3-cyclic phosphate + ethanolamine. The enzyme catalyses a 1-acyl-sn-glycero-3-phosphocholine = a 1-acyl-sn-glycero-2,3-cyclic phosphate + choline. It catalyses the reaction a 1-acyl-sn-glycero-3-phosphoethanolamine = a 1-acyl-sn-glycero-2,3-cyclic phosphate + ethanolamine. In terms of biological role, dermonecrotic toxins cleave the phosphodiester linkage between the phosphate and headgroup of certain phospholipids (sphingolipid and lysolipid substrates), forming an alcohol (often choline) and a cyclic phosphate. This toxin acts on sphingomyelin (SM). It may also act on ceramide phosphoethanolamine (CPE), lysophosphatidylcholine (LPC) and lysophosphatidylethanolamine (LPE), but not on lysophosphatidylserine (LPS), and lysophosphatidylglycerol (LPG). It acts by transphosphatidylation, releasing exclusively cyclic phosphate products as second products. Induces dermonecrosis, hemolysis, increased vascular permeability, edema, inflammatory response, and platelet aggregation. This Loxosceles spinulosa (Recluse spider) protein is Dermonecrotic toxin LspiSicTox-betaIE1ii.